Reading from the N-terminus, the 186-residue chain is MDKEHLKKNLQEKMEKALKVLDHELKGLRTSRASVNLLDSVTVEAYGSKMPLSQVASLSTPDARTINVQVWDKSMVSSVEKGITIANLGLTPATDGQLIRLPIPALTEERRTELVKLAHKYGEDTKISLRNIRRDGNEVLKKLEKDNVIAKDEHHSLSEQVQKLTDDYSSKVDSVIKQKEQEIMTV.

Belongs to the RRF family.

It localises to the cytoplasm. In terms of biological role, responsible for the release of ribosomes from messenger RNA at the termination of protein biosynthesis. May increase the efficiency of translation by recycling ribosomes from one round of translation to another. This chain is Ribosome-recycling factor, found in Rickettsia rickettsii (strain Iowa).